A 239-amino-acid polypeptide reads, in one-letter code: Leucine rich adaptor protein 1 (239 aa).

2 LRR repeats span residues 55–83 (LGDK…LVTL) and 93–114 (LLEE…QYSL). Residues 107–118 (LTSSQYSLTGGS) show a composition bias toward low complexity. The segment at 107–140 (LTSSQYSLTGGSPERSRRGSWDSLPDTSSTDRLD) is disordered. S118, S126, and S129 each carry phosphoserine.

In terms of assembly, forms a tripartite complex with CDC42BPA/CDC42BPB and MYO18A acting as an adapter connecting both. Its binding to CDC42BPA/CDC42BPB results in their activation by abolition of their negative autoregulation. Interacts with CDC42BPA and CDC42BPB. Post-translationally, phosphorylated.

It is found in the cytoplasm. Acts as an activator of the canonical NF-kappa-B pathway and drive the production of pro-inflammatory cytokines. Promotes the antigen (Ag)-presenting and priming function of dendritic cells via the canonical NF-kappa-B pathway. In concert with MYO18A and CDC42BPA/CDC42BPB, is involved in modulating lamellar actomyosin retrograde flow that is crucial to cell protrusion and migration. Activates CDC42BPA/CDC42BPB and targets it to actomyosin through its interaction with MYO18A, leading to MYL9/MLC2 phosphorylation and MYH9/MYH10-dependent actomyosin assembly in the lamella. In Rattus norvegicus (Rat), this protein is Leucine rich adaptor protein 1 (Lurap1).